A 991-amino-acid polypeptide reads, in one-letter code: Regulator of telomere elongation helicase 1 homolog (991 aa).

Positions 7 to 319 (NGIPVNFPFE…DDLVLLKEIL (313 aa)) constitute a Helicase ATP-binding domain. 42 to 49 (SPTGTGKT) contacts ATP. Residues Cys148, Cys166, Cys175, and Cys211 each coordinate [4Fe-4S] cluster. The DEAH box signature appears at 254-257 (DEAH). A disordered region spans residues 812 to 833 (SMKVNPHSRSTKSAGDDAEAGG).

It belongs to the helicase family. RAD3/XPD subfamily.

The protein resides in the nucleus. The catalysed reaction is ATP + H2O = ADP + phosphate + H(+). In terms of biological role, a probable ATP-dependent DNA helicase implicated in DNA repair and the maintenance of genomic stability. Acts as an anti-recombinase to counteract toxic recombination and limit crossover during meiosis. Regulates meiotic recombination and crossover homeostasis by physically dissociating strand invasion events and thereby promotes noncrossover repair by meiotic synthesis dependent strand annealing (SDSA) as well as disassembly of D loop recombination intermediates. The chain is Regulator of telomere elongation helicase 1 homolog from Anopheles gambiae (African malaria mosquito).